Here is a 421-residue protein sequence, read N- to C-terminus: Subtilisin-like protease 2 (421 aa).

Residues Met1–Gly16 form the signal peptide. Positions Asp17–Ala122 are excised as a propeptide. Positions Gln36–Ala122 constitute an Inhibitor I9 domain. Residues Arg131–Tyr421 form the Peptidase S8 domain. Active-site charge relay system residues include Asp169 and His201. Residues Asn248, Asn261, and Asn348 are each glycosylated (N-linked (GlcNAc...) asparagine). Ser357 acts as the Charge relay system in catalysis. N-linked (GlcNAc...) asparagine glycosylation is present at Asn388.

It belongs to the peptidase S8 family.

It localises to the secreted. In terms of biological role, secreted subtilisin-like serine protease with keratinolytic activity that contributes to pathogenicity. The chain is Subtilisin-like protease 2 (SUB2) from Arthroderma benhamiae (strain ATCC MYA-4681 / CBS 112371) (Trichophyton mentagrophytes).